Here is a 162-residue protein sequence, read N- to C-terminus: Large ribosomal subunit protein uL10 (162 aa).

Belongs to the universal ribosomal protein uL10 family. In terms of assembly, part of the ribosomal stalk of the 50S ribosomal subunit. The N-terminus interacts with L11 and the large rRNA to form the base of the stalk. The C-terminus forms an elongated spine to which L12 dimers bind in a sequential fashion forming a multimeric L10(L12)X complex.

Functionally, forms part of the ribosomal stalk, playing a central role in the interaction of the ribosome with GTP-bound translation factors. The polypeptide is Large ribosomal subunit protein uL10 (Borrelia recurrentis (strain A1)).